The chain runs to 238 residues: Sugar fermentation stimulation protein homolog (238 aa).

It belongs to the SfsA family.

This is Sugar fermentation stimulation protein homolog from Vibrio parahaemolyticus serotype O3:K6 (strain RIMD 2210633).